We begin with the raw amino-acid sequence, 924 residues long: DNA repair and recombination protein RDH54 (924 aa).

A compositionally biased stretch (basic and acidic residues) spans 1-10 (MQIPKYENKP). Disordered stretches follow at residues 1–21 (MQIPKYENKPFKPPRRVGSNK) and 155–182 (EALSQNMGNPNPPTTSTTETVPSTKNDG). Residues 168-178 (TTSTTETVPST) show a composition bias toward low complexity. Residues 299-487 (LENDSDISGC…FTIIDFINPG (189 aa)) enclose the Helicase ATP-binding domain. Residue 346-353 (IPLTGLCK) coordinates ATP. The DEGH box signature appears at 472-475 (NDLN). Lysine 615 is covalently cross-linked (Glycyl lysine isopeptide (Lys-Gly) (interchain with G-Cter in ubiquitin)). One can recognise a Helicase C-terminal domain in the interval 631–790 (KLRVLMTLLE…DSEMRNKESS (160 aa)).

Belongs to the SNF2/RAD54 helicase family. In terms of assembly, interacts with RAD51 and DMC1.

The protein resides in the nucleus. It carries out the reaction ATP + H2O = ADP + phosphate + H(+). Functionally, involved in the recombinational repair of double-strand breaks (DSB) in DNA during mitosis and meiosis. Has DNA dependent ATPase activity. Promotes D-loop (displacement loop) formation with RAD51 recombinase. Modifies the topology of double-stranded DNA during the D-loop reaction to facilitate the invasion of the homologous duplex molecule by the initiating single-stranded DNA substrate. Required for adaptation from G2/M checkpoint arrest induced by a double strand break, by participating in monitoring the extent of single-stranded DNA produced by resection of DNA ends. This role is distinct from its roles in recombination. Promotes colocalization of RAD51 and DMC1 during meiotic recombination. Involved in crossover interference. In Saccharomyces cerevisiae (strain AWRI1631) (Baker's yeast), this protein is DNA repair and recombination protein RDH54 (RDH54).